Reading from the N-terminus, the 513-residue chain is Probable DNA primase large subunit (513 aa).

4 residues coordinate [4Fe-4S] cluster: C315, C398, C415, and C457.

This sequence belongs to the eukaryotic-type primase large subunit family. Heterodimer of a small subunit and a large subunit. Requires [4Fe-4S] cluster as cofactor.

Functionally, DNA primase is the polymerase that synthesizes small RNA primers for the Okazaki fragments made during discontinuous DNA replication. The sequence is that of Probable DNA primase large subunit from Neurospora crassa (strain ATCC 24698 / 74-OR23-1A / CBS 708.71 / DSM 1257 / FGSC 987).